Consider the following 352-residue polypeptide: 3-isopropylmalate dehydrogenase (352 aa).

Residues Arg91, Arg101, Arg129, and Asp218 each coordinate substrate. Residues Asp218, Asp242, and Asp246 each contribute to the Mg(2+) site. Position 281-293 (281-293 (GSAPDIAGKGLAN)) interacts with NAD(+).

This sequence belongs to the isocitrate and isopropylmalate dehydrogenases family. LeuB type 1 subfamily. In terms of assembly, homodimer. It depends on Mg(2+) as a cofactor. The cofactor is Mn(2+).

The protein localises to the cytoplasm. It carries out the reaction (2R,3S)-3-isopropylmalate + NAD(+) = 4-methyl-2-oxopentanoate + CO2 + NADH. The protein operates within amino-acid biosynthesis; L-leucine biosynthesis; L-leucine from 3-methyl-2-oxobutanoate: step 3/4. Its function is as follows. Catalyzes the oxidation of 3-carboxy-2-hydroxy-4-methylpentanoate (3-isopropylmalate) to 3-carboxy-4-methyl-2-oxopentanoate. The product decarboxylates to 4-methyl-2 oxopentanoate. This Novosphingobium aromaticivorans (strain ATCC 700278 / DSM 12444 / CCUG 56034 / CIP 105152 / NBRC 16084 / F199) protein is 3-isopropylmalate dehydrogenase.